The following is a 477-amino-acid chain: UDP-N-acetylmuramate--L-alanine ligase (477 aa).

115-121 (GTHGKTT) contacts ATP.

This sequence belongs to the MurCDEF family.

The protein localises to the cytoplasm. The enzyme catalyses UDP-N-acetyl-alpha-D-muramate + L-alanine + ATP = UDP-N-acetyl-alpha-D-muramoyl-L-alanine + ADP + phosphate + H(+). Its pathway is cell wall biogenesis; peptidoglycan biosynthesis. Cell wall formation. The protein is UDP-N-acetylmuramate--L-alanine ligase of Gluconobacter oxydans (strain 621H) (Gluconobacter suboxydans).